The sequence spans 754 residues: 5-methyltetrahydropteroyltriglutamate--homocysteine methyltransferase (754 aa).

Residues 17-20 (RELK) and K117 contribute to the 5-methyltetrahydropteroyltri-L-glutamate site. L-homocysteine is bound by residues 431 to 433 (IGS) and E484. L-methionine contacts are provided by residues 431-433 (IGS) and E484. 5-methyltetrahydropteroyltri-L-glutamate-binding positions include 515–516 (RC) and W561. Position 599 (D599) interacts with L-homocysteine. D599 contributes to the L-methionine binding site. E605 provides a ligand contact to 5-methyltetrahydropteroyltri-L-glutamate. Zn(2+)-binding residues include H641, C643, and E665. H694 (proton donor) is an active-site residue. C726 is a binding site for Zn(2+).

It belongs to the vitamin-B12 independent methionine synthase family. Zn(2+) serves as cofactor.

It carries out the reaction 5-methyltetrahydropteroyltri-L-glutamate + L-homocysteine = tetrahydropteroyltri-L-glutamate + L-methionine. It participates in amino-acid biosynthesis; L-methionine biosynthesis via de novo pathway; L-methionine from L-homocysteine (MetE route): step 1/1. In terms of biological role, catalyzes the transfer of a methyl group from 5-methyltetrahydrofolate to homocysteine resulting in methionine formation. This is 5-methyltetrahydropteroyltriglutamate--homocysteine methyltransferase from Salmonella enteritidis PT4 (strain P125109).